The sequence spans 881 residues: Rho GTPase-activating protein 17 (881 aa).

The 233-residue stretch at 14 to 246 (QTVGRAEKTE…MRAHQDKWAE (233 aa)) folds into the BAR domain. Residues 252–442 (TPLEEHLKRS…PIIQHADWFF (191 aa)) form the Rho-GAP domain. A compositionally biased stretch (polar residues) spans 459–475 (TPSSNHSFHTGNDSDSG). The segment at 459–482 (TPSSNHSFHTGNDSDSGTLERKRP) is disordered. 2 positions are modified to phosphoserine: Ser484 and Ser575. A disordered region spans residues 511 to 881 (GGTLNRKHIS…IDNDTESTAL (371 aa)). Positions 592–617 (RNNSQIASGQNQPQAAAGSHQLSMGQ) are enriched in polar residues. Positions 637 to 650 (APAPPKPGNPPPGH) are enriched in pro residues. Low complexity predominate over residues 653-664 (GQSSSGTSQHPP). Positions 665-678 (SLSPKPPTRSPSPP) are enriched in pro residues. Residues Thr679 and Thr682 each carry the phosphothreonine modification. Residues 679-698 (TQHTGQPPGQPSAPSQLSAP) show a composition bias toward low complexity. 2 positions are modified to phosphoserine: Ser702 and Ser704. Composition is skewed to pro residues over residues 712–721 (NHPPPQPPTQ), 752–764 (HTPP…PSTP), and 806–816 (RPSVPPPPQPP). Phosphothreonine occurs at positions 753, 757, and 759. Positions 753-766 (TPPQTPTPPSTPPL) match the SH3-binding motif. Ser762 carries the phosphoserine modification. Residue Thr763 is modified to Phosphothreonine. Residues 822–844 (GDSSLTNTAPTASKIVTDSNSRV) show a composition bias toward polar residues. A compositionally biased stretch (basic and acidic residues) spans 845–865 (SEPHRSIFPEMHSDSASKDVP). Positions 872–881 (IDNDTESTAL) are enriched in acidic residues.

Component of a complex whose core is composed of ARHGAP17, AMOT, PALS1, PATJ and PARD3/PAR3. Interacts with NHERF1, FNBP1, TRIP10, CAPZA (CAPZA1, CAPZA2 or CAPZA3), CAPZB, CD2AP and SH3KBP1/CIN85. In terms of tissue distribution, ubiquitously expressed. Expressed at higher level in heart and placenta.

Its subcellular location is the membrane. The protein localises to the cytoplasm. It is found in the cell junction. The protein resides in the tight junction. Rho GTPase-activating protein involved in the maintenance of tight junction by regulating the activity of CDC42, thereby playing a central role in apical polarity of epithelial cells. Specifically acts as a GTPase activator for the CDC42 GTPase by converting it to an inactive GDP-bound state. The complex formed with AMOT acts by regulating the uptake of polarity proteins at tight junctions, possibly by deciding whether tight junction transmembrane proteins are recycled back to the plasma membrane or sent elsewhere. Participates in the Ca(2+)-dependent regulation of exocytosis, possibly by catalyzing GTPase activity of Rho family proteins and by inducing the reorganization of the cortical actin filaments. Acts as a GTPase activator in vitro for RAC1. The chain is Rho GTPase-activating protein 17 (ARHGAP17) from Homo sapiens (Human).